The following is a 278-amino-acid chain: ADP-dependent (S)-NAD(P)H-hydrate dehydratase (278 aa).

Residues 4 to 276 (DDDLVRQVIR…KAIPSWMKKL (273 aa)) enclose the YjeF C-terminal domain. (6S)-NADPHX contacts are provided by Ala39, Gly102, and His152. An AMP-binding site is contributed by Gly216. (6S)-NADPHX is bound at residue Asp217.

Belongs to the NnrD/CARKD family. In terms of assembly, homotetramer. Mg(2+) is required as a cofactor.

It carries out the reaction (6S)-NADHX + ADP = AMP + phosphate + NADH + H(+). The catalysed reaction is (6S)-NADPHX + ADP = AMP + phosphate + NADPH + H(+). Functionally, catalyzes the dehydration of the S-form of NAD(P)HX at the expense of ADP, which is converted to AMP. Together with NAD(P)HX epimerase, which catalyzes the epimerization of the S- and R-forms, the enzyme allows the repair of both epimers of NAD(P)HX, a damaged form of NAD(P)H that is a result of enzymatic or heat-dependent hydration. This is ADP-dependent (S)-NAD(P)H-hydrate dehydratase from Streptococcus thermophilus.